Consider the following 554-residue polypeptide: Methyl-CpG-binding domain protein 4 (554 aa).

Positions 1–23 are disordered; sequence MESPNLGDNRVRGESLVPDPPWD. In terms of domain architecture, MBD spans 63–135; that stretch reads STTATEGHKP…EDFNFTVLPK (73 aa). The span at 154–164 shows a compositional bias: polar residues; that stretch reads QPNETDVSKQN. Disordered regions lie at residues 154 to 195 and 209 to 252; these read QPNE…SNSN and DVDS…RKRA. Low complexity predominate over residues 178–195; sequence LPSGTSESPESSGLSNSN. Phosphoserine is present on residues Ser296 and Ser402. Asp534 is a catalytic residue.

Interacts with MLH1.

Its subcellular location is the nucleus. Functionally, mismatch-specific DNA N-glycosylase involved in DNA repair. Has thymine glycosylase activity and is specific for G:T mismatches within methylated and unmethylated CpG sites. Can also remove uracil or 5-fluorouracil in G:U mismatches. Has no lyase activity. Was first identified as methyl-CpG-binding protein. This chain is Methyl-CpG-binding domain protein 4 (Mbd4), found in Mus musculus (Mouse).